An 895-amino-acid polypeptide reads, in one-letter code: Glutamate receptor 2.3 (895 aa).

Residues 1–23 (MRTEKLFFCILLVFFFCLEFNRG) form the signal peptide. Residues 24-582 (QNNGKTLVDV…ILFMKPLSWK (559 aa)) are Extracellular-facing. N-linked (GlcNAc...) asparagine glycans are attached at residues Asn-52, Asn-203, Asn-266, Asn-330, Asn-342, Asn-477, and Asn-542. A helical membrane pass occupies residues 583-603 (LWLTSFISFFLVGCTVWVLEY). Residues 604–610 (KRNPDFS) lie on the Cytoplasmic side of the membrane. A helical transmembrane segment spans residues 611 to 631 (GPPRFQASTICWFAFSTMVFA). At 632–635 (PRER) the chain is on the cytoplasmic side. The helical transmembrane segment at 636 to 656 (VFSFWARALVIAWYFLVLVLT) threads the bilayer. Residues 657 to 830 (QSYTASLASL…FTSRQLDIDS (174 aa)) lie on the Extracellular side of the membrane. The chain crosses the membrane as a helical span at residues 831 to 851 (FLFLFVGVLLVCVMALGNFTY). Topologically, residues 852–895 (CFLAKDQVSYLDKVEMSPCSSSQQMPVKRKTQLNMSQVHDQDSL) are cytoplasmic. Positions 873–895 (SQQMPVKRKTQLNMSQVHDQDSL) are disordered.

The protein belongs to the glutamate-gated ion channel (TC 1.A.10.1) family. May form heteromers. In terms of tissue distribution, expressed predominantly in roots.

The protein localises to the membrane. Glutamate-gated receptor that probably acts as a non-selective cation channel. May be involved in light-signal transduction and calcium homeostasis via the regulation of calcium influx into cells. The sequence is that of Glutamate receptor 2.3 (GLR2.3) from Arabidopsis thaliana (Mouse-ear cress).